Reading from the N-terminus, the 238-residue chain is Probable transcriptional regulatory protein SUB0364 (238 aa).

It belongs to the TACO1 family. YeeN subfamily.

It localises to the cytoplasm. This Streptococcus uberis (strain ATCC BAA-854 / 0140J) protein is Probable transcriptional regulatory protein SUB0364.